Consider the following 273-residue polypeptide: Formamidopyrimidine-DNA glycosylase (273 aa).

Catalysis depends on Pro-2, which acts as the Schiff-base intermediate with DNA. Glu-3 acts as the Proton donor in catalysis. The active-site Proton donor; for beta-elimination activity is the Lys-58. DNA is bound by residues His-92, Arg-111, and Lys-153. An FPG-type zinc finger spans residues 238–272; the sequence is KVYGREGQSCLSCSSTIIKIKHSGRSTFYCKTCQY. Residue Arg-262 is the Proton donor; for delta-elimination activity of the active site.

This sequence belongs to the FPG family. As to quaternary structure, monomer. It depends on Zn(2+) as a cofactor.

The enzyme catalyses Hydrolysis of DNA containing ring-opened 7-methylguanine residues, releasing 2,6-diamino-4-hydroxy-5-(N-methyl)formamidopyrimidine.. It carries out the reaction 2'-deoxyribonucleotide-(2'-deoxyribose 5'-phosphate)-2'-deoxyribonucleotide-DNA = a 3'-end 2'-deoxyribonucleotide-(2,3-dehydro-2,3-deoxyribose 5'-phosphate)-DNA + a 5'-end 5'-phospho-2'-deoxyribonucleoside-DNA + H(+). Involved in base excision repair of DNA damaged by oxidation or by mutagenic agents. Acts as a DNA glycosylase that recognizes and removes damaged bases. Has a preference for oxidized purines, such as 7,8-dihydro-8-oxoguanine (8-oxoG). Has AP (apurinic/apyrimidinic) lyase activity and introduces nicks in the DNA strand. Cleaves the DNA backbone by beta-delta elimination to generate a single-strand break at the site of the removed base with both 3'- and 5'-phosphates. The protein is Formamidopyrimidine-DNA glycosylase of Rickettsia peacockii (strain Rustic).